Consider the following 584-residue polypeptide: N(6)-adenosine-methyltransferase subunit METTL3 (584 aa).

2 disordered regions span residues 1–65 and 162–221; these read MSDT…EHPP and KADD…SNKV. Over residues 187 to 204 the composition is skewed to polar residues; it reads RKSSVSLATASISQLTAS. The Nuclear localization signal signature appears at 213–220; that stretch reads DKKGRSNK. Residues 381 to 382 and D399 each bind S-adenosyl-L-methionine; that span reads DI. Residues 400–414 form a gate loop 1 region; the sequence is PPWDIHMELPYGTLT. Interaction with METTL14 regions lie at residues 454 to 458 and 468 to 484; these read DRVDE and QRIIRTGRTGHWLNHGK. An interphase loop region spans residues 466–483; the sequence is QLQRIIRTGRTGHWLNHG. The interval 469-482 is positively charged region required for RNA-binding; that stretch reads RIIRTGRTGHWLNH. Residues 511–519 are gate loop 2; sequence VRSTSHKPD. S-adenosyl-L-methionine-binding positions include K517, 540-543, and 553-554; these read RPHN and NQ.

This sequence belongs to the MT-A70-like family. Heterodimer; heterodimerizes with mettl14 to form an antiparallel heterodimer that constitutes an active methyltransferase. Component of the WMM complex, a N6-methyltransferase complex composed of a catalytic subcomplex, named MAC, and of an associated subcomplex, named MACOM. The MAC subcomplex is composed of mettl3 and mettl14. Expressed in the hemato-vascular system: enriched in sorted endothelial cells and haemogenic endothelium.

The protein resides in the nucleus. It localises to the nucleus speckle. It is found in the cytoplasm. The catalysed reaction is an adenosine in mRNA + S-adenosyl-L-methionine = an N(6)-methyladenosine in mRNA + S-adenosyl-L-homocysteine + H(+). Its function is as follows. The METTL3-METTL14 heterodimer forms a N6-methyltransferase complex that methylates adenosine residues at the N(6) position of some RNAs and regulates various processes such as the circadian clock, differentiation of embryonic and hematopoietic stem cells, cortical neurogenesis, response to DNA damage, differentiation of T-cells and primary miRNA processing. In the heterodimer formed with mettl14, mettl3 constitutes the catalytic core. N6-methyladenosine (m6A), which takes place at the 5'-[AG]GAC-3' consensus sites of some mRNAs, plays a role in mRNA stability, processing and translation efficiency. M6A is also involved in hematopoietic stem cells specification: m6A methylation and subsequent destabilization of mRNAs, such as notch1a, leads to decreased Notch signaling, promoting endothelial to hematopoietic transition. M6A also takes place in other RNA molecules, such as primary miRNA (pri-miRNAs). Mediates methylation of pri-miRNAs. This Danio rerio (Zebrafish) protein is N(6)-adenosine-methyltransferase subunit METTL3.